Consider the following 1055-residue polypeptide: MASSSSRTRSSRPPSPASSTSSSHLSNRLIPRSNSTSASSLITSAAGIASRSMTPSRTFSDSGLIGSGSFGIGSPVPYPSEELLGDPMDDTISSERDSISVTVRFRPLSDREYQRGDEVAWYPDGDTLVRHEYNPLTAYAFDKVFGPQATTIDVYDVAARPVVKAAMEGVNGTVFAYGVTSSGKTHTMHGDQESPGIIPLAIKDVFSIIQDTPGREFLLRVSYLEIYNEVINDLLDPTGQNLRVREDSQGTYVEGIKEEVVLSPGHALSFIAAGEEHRHVGSNNFNLLSSRSHTIFTLMVESSATGDEYDGVIFSQLNLIDLAGSESSKTETTGLRRKEGSYINKSLLTLGTVIGKLSEGKATHIPYRDSKLTRLLQSSLSGHGHVSLICTITPASSSSEETHNTLKFASRAKSIEIYASRNQIIDEKSLIKKYQREISTLKLELDQLRRGMLVGVSHEELMSLKQQLEEGQVKMQSRLEEEEEAKAALMSRIQKLTKLILVSTKNSIPGYSGDIPTHQRSLSAGKDDKFDSLLLESDNLGSPSSTLALLSEGSLGFNHRRSSSKLNDENSPGAEFTQGVMTPDEIDLLVEQVKMLAGEIAFSTSTLKRLVDQSVNDPENSQTQIQNLEREIHEKQRQMRGLEQLIIESGEASIANASLVEMQQKVMSLMTQCNEKSFELEIKSADNCILQEQLQEKCTENKELHEKVNLLEQRLNAVSSEKSSPSCSNKAVSGEYADELKKKIQSQEIENEELKLEHVQIVEENSGLRVQNQKLAEEASYAKELASAAAVELKNLASEVTKLSLQNTKLEKELAAARDLAQTRNPMNGVNRKYNDGARSGRKGRISSSRSSGDEFDAWNLDPEDLKMELQVRKQREVALESALAEKEFIEDEYRKKAEEAKRREEALENDLANMWVLVAKLKKDNGALPEPNGTDPGRELEKSQSHAVLKERQVSSAPRQPEVVVVAKTEETPKEEPLVARLKARMQEMKEKEMKSQANGDANSHICKVCFESPTAAILLPCRHFCLCKSCSLACSECPICRTKISDRLFAFPS.

Over residues 1-23 (MASSSSRTRSSRPPSPASSTSSS) the composition is skewed to low complexity. The disordered stretch occupies residues 1 to 36 (MASSSSRTRSSRPPSPASSTSSSHLSNRLIPRSNST). The N-terminal 96 residues, 1-96 (MASSSSRTRS…PMDDTISSER (96 aa)), are a transit peptide targeting the mitochondrion. The 318-residue stretch at 98–415 (SISVTVRFRP…LKFASRAKSI (318 aa)) folds into the Kinesin motor domain. Residue 178–185 (GVTSSGKT) coordinates ATP. Coiled-coil stretches lie at residues 419-503 (ASRN…ILVS), 618-653 (PENS…GEAS), and 694-823 (LQEK…LAQT). A disordered region spans residues 826–856 (PMNGVNRKYNDGARSGRKGRISSSRSSGDEF). Positions 880-911 (LESALAEKEFIEDEYRKKAEEAKRREEALEND) form a coiled coil. The interval 926–963 (NGALPEPNGTDPGRELEKSQSHAVLKERQVSSAPRQPE) is disordered. Residues 937-954 (PGRELEKSQSHAVLKERQ) are compositionally biased toward basic and acidic residues. Residues 1008 to 1043 (CKVCFESPTAAILLPCRHFCLCKSCSLACSECPICR) form an RING-type zinc finger.

This sequence belongs to the TRAFAC class myosin-kinesin ATPase superfamily. Kinesin family. KIN-7 subfamily.

The protein resides in the mitochondrion. In Arabidopsis thaliana (Mouse-ear cress), this protein is Kinesin-like protein KIN-7D, mitochondrial.